We begin with the raw amino-acid sequence, 415 residues long: Gamma-glutamyl phosphate reductase (415 aa).

It belongs to the gamma-glutamyl phosphate reductase family.

Its subcellular location is the cytoplasm. The enzyme catalyses L-glutamate 5-semialdehyde + phosphate + NADP(+) = L-glutamyl 5-phosphate + NADPH + H(+). Its pathway is amino-acid biosynthesis; L-proline biosynthesis; L-glutamate 5-semialdehyde from L-glutamate: step 2/2. Catalyzes the NADPH-dependent reduction of L-glutamate 5-phosphate into L-glutamate 5-semialdehyde and phosphate. The product spontaneously undergoes cyclization to form 1-pyrroline-5-carboxylate. This chain is Gamma-glutamyl phosphate reductase, found in Bacillus mycoides (strain KBAB4) (Bacillus weihenstephanensis).